Consider the following 136-residue polypeptide: MSVSLFTAFTVLSLCLHTSTSEFQLSTISAAPSFLPEAPSSFSASTPAMSPDTSPLFPTPGSSEMSPSPSESSIMPTIPSSLSPPNPDAVTPDPLLEVSPVGSPLPASSSVCLVSSQLSSLLLVLLMLLLAFCSFF.

A signal peptide spans Met1 to Ser21. The segment at Ala38–Leu95 is disordered. A compositionally biased stretch (polar residues) spans Ser40–Thr53. Low complexity predominate over residues Thr59–Ser81. Residue Ser108 is the site of GPI-anchor amidated serine attachment. A propeptide spans Ser109–Phe136 (removed in mature form).

The protein belongs to the classical AGP family. In terms of processing, O-glycosylated on the hydroxyproline residues.

Its subcellular location is the cell membrane. Functionally, proteoglycan that seems to be implicated in diverse developmental roles such as differentiation, cell-cell recognition, embryogenesis and programmed cell death. The chain is Classical arabinogalactan protein 26 (AGP26) from Arabidopsis thaliana (Mouse-ear cress).